Consider the following 1036-residue polypeptide: Multidrug resistance protein MdtC (1036 aa).

The next 10 helical transmembrane spans lie at valine 12–valine 34, arginine 336–leucine 353, leucine 360–phenylalanine 382, valine 431–leucine 450, phenylalanine 463–methionine 485, tryptophan 528–isoleucine 547, leucine 853–isoleucine 875, leucine 895–valine 917, leucine 949–serine 971, and isoleucine 986–phenylalanine 1008.

The protein belongs to the resistance-nodulation-cell division (RND) (TC 2.A.6) family. MdtC subfamily. Part of a tripartite efflux system composed of MdtA, MdtB and MdtC. MdtC forms a heteromultimer with MdtB.

It is found in the cell inner membrane. The polypeptide is Multidrug resistance protein MdtC (Photorhabdus laumondii subsp. laumondii (strain DSM 15139 / CIP 105565 / TT01) (Photorhabdus luminescens subsp. laumondii)).